The following is a 626-amino-acid chain: MARIARLPDIVANKISAGEVVQRPASVVKELLENAIDAGADKITVAIKDAGKELIRIVDNGAGMLREDALLCVERFATSKITGVDDLDSLQSLGFRGEALASISSVSHFELKTRTAKATLGLRLRYEGGVLVEESGVQGEQGTTISVRNLFYNVPARRKFLKSNATEYNHIFEIVKSFALAYPEIEWRMYSDDEELFHVKRPDILERLNVFYGDDFAASMIELSEENDYLSIKGYLGKPAMQKRRKLDQYFFVNRRVVQNRMLSQAVQQAYGDLLVERQTPFVLLFLTIDPSRIDVNVHPAKMEIRFDDERNVRNMFYPVIKRAIQLHDFSPDLVSTECDQLSSLQPQNSAFRKFSFPDIPHRSITTGDLYRNYREGAVDEPAISRVASAHQGEMFPRHSSADYALAGSGLREGDEGLSSILLAPLYDDDVVPNPKEVEPKIWQLHNKYLICQIKTGLMIIDQHVAHERVLYERAVDVMNQNVPNSQQLLFPQKVEFRPWEYEIFEEIREDLYRLGFNLRLFGNKTIMIEGVPQDVKPGSEVTILQDMIAEYQDNASKLKLDKRDNLAKSYSCRNAIMAGQKLSLEEMRSLIDNLFATREPYSCPHGRPVIIKLSLDQLDKMFGRK.

This sequence belongs to the DNA mismatch repair MutL/HexB family.

Functionally, this protein is involved in the repair of mismatches in DNA. It is required for dam-dependent methyl-directed DNA mismatch repair. May act as a 'molecular matchmaker', a protein that promotes the formation of a stable complex between two or more DNA-binding proteins in an ATP-dependent manner without itself being part of a final effector complex. The protein is DNA mismatch repair protein MutL of Pelodictyon phaeoclathratiforme (strain DSM 5477 / BU-1).